We begin with the raw amino-acid sequence, 367 residues long: 2-oxoisovalerate dehydrogenase subunit alpha (367 aa).

Residues phenylalanine 66, tyrosine 95, 128–131 (MPEH), and serine 144 contribute to the substrate site. Residue 94–96 (YYR) participates in thiamine diphosphate binding. Residues 144–146 (SPI), 174–180 (GDGATSE), 204–208 (NFYAI), and histidine 273 contribute to the thiamine diphosphate site. Positions 175, 204, and 206 each coordinate Mg(2+).

Belongs to the BCKDHA family. In terms of assembly, heterotetramer of two alpha and two beta chains. Directly associated with ODBB in the E1 complex. Thiamine diphosphate serves as cofactor.

The enzyme catalyses N(6)-[(R)-lipoyl]-L-lysyl-[protein] + 3-methyl-2-oxobutanoate + H(+) = N(6)-[(R)-S(8)-2-methylpropanoyldihydrolipoyl]-L-lysyl-[protein] + CO2. The branched-chain alpha-keto dehydrogenase complex catalyzes the overall conversion of alpha-keto acids to acyl-CoA and CO(2). It contains multiple copies of three enzymatic components: branched-chain alpha-keto acid decarboxylase (E1), lipoamide acyltransferase (E2) and lipoamide dehydrogenase (E3). In Thermus thermophilus (strain ATCC 27634 / DSM 579 / HB8), this protein is 2-oxoisovalerate dehydrogenase subunit alpha.